The sequence spans 193 residues: C-type lectin domain family 3 member A homolog (193 aa).

The N-terminal stretch at 1-24 is a signal peptide; the sequence is MAQAGLLIWLFFTILLLDLTCTQS. Disulfide bonds link cysteine 66/cysteine 76, cysteine 93/cysteine 188, and cysteine 164/cysteine 180. Positions 72–189 constitute a C-type lectin domain; the sequence is IHKKCYLSFE…CRSLKKYICE (118 aa).

It localises to the secreted. The sequence is that of C-type lectin domain family 3 member A homolog (clec3a) from Xenopus laevis (African clawed frog).